A 163-amino-acid polypeptide reads, in one-letter code: MFRRLIGVVVATVLLSFQLLVGSATAVELDKATRTVPLNAEGETTVLSLKQVKEGKRLFNYACAQCHAGGVTKTNQNVGLTPEDLALATPNRNNIEGLVDYLKNPTTYDGEEEISEIHPSIKSADIFTAMRNLTDEDLEAIAGHILIQPKIVGTKWGGGKIYY.

An N-terminal signal peptide occupies residues 1–26 (MFRRLIGVVVATVLLSFQLLVGSATA). Heme c contacts are provided by cysteine 63, cysteine 66, histidine 67, and histidine 118.

It belongs to the cytochrome c family. PsbV subfamily. In terms of assembly, PSII is composed of 1 copy each of membrane proteins PsbA, PsbB, PsbC, PsbD, PsbE, PsbF, PsbH, PsbI, PsbJ, PsbK, PsbL, PsbM, PsbT, PsbX, PsbY, PsbZ, Psb30/Ycf12, peripheral proteins PsbO, CyanoQ (PsbQ), PsbU, PsbV and a large number of cofactors. It forms dimeric complexes. The cofactor is heme c.

Its subcellular location is the cellular thylakoid membrane. Its function is as follows. One of the extrinsic, lumenal subunits of photosystem II (PSII). PSII is a light-driven water plastoquinone oxidoreductase, using light energy to abstract electrons from H(2)O, generating a proton gradient subsequently used for ATP formation. The extrinsic proteins stabilize the structure of photosystem II oxygen-evolving complex (OEC), the ion environment of oxygen evolution and protect the OEC against heat-induced inactivation. Low-potential cytochrome c that plays a role in the OEC of PSII. The protein is Photosystem II extrinsic protein V of Nostoc punctiforme (strain ATCC 29133 / PCC 73102).